A 60-amino-acid chain; its full sequence is Large ribosomal subunit protein uL30 (60 aa).

Belongs to the universal ribosomal protein uL30 family. As to quaternary structure, part of the 50S ribosomal subunit.

This is Large ribosomal subunit protein uL30 from Dechloromonas aromatica (strain RCB).